A 333-amino-acid polypeptide reads, in one-letter code: Homeobox protein Hox-D13 (333 aa).

Residues 1-24 (MDGLRTDGGAAGAAPASSSSSSSV) form a disordered region. Over residues 12–24 (GAAPASSSSSSSV) the composition is skewed to low complexity. Residues 266 to 325 (GRKKRVPYTKLQLKELENEYAINKFINKDKRRRISAATNLSERQVTIWFQNRRVKDKKIV) constitute a DNA-binding region (homeobox).

Belongs to the Abd-B homeobox family.

It is found in the nucleus. Functionally, sequence-specific transcription factor that binds gene promoters and activates their transcription. Part of a developmental regulatory system that provides cells with specific positional identities on the anterior-posterior axis. This chain is Homeobox protein Hox-D13 (HOXD13), found in Carollia perspicillata (Seba's short-tailed bat).